Consider the following 169-residue polypeptide: Crossover junction endodeoxyribonuclease RuvC (169 aa).

Residues D11, E71, and D143 contribute to the active site. Mg(2+)-binding residues include D11, E71, and D143.

Belongs to the RuvC family. Homodimer which binds Holliday junction (HJ) DNA. The HJ becomes 2-fold symmetrical on binding to RuvC with unstacked arms; it has a different conformation from HJ DNA in complex with RuvA. In the full resolvosome a probable DNA-RuvA(4)-RuvB(12)-RuvC(2) complex forms which resolves the HJ. Mg(2+) is required as a cofactor.

The protein localises to the cytoplasm. The catalysed reaction is Endonucleolytic cleavage at a junction such as a reciprocal single-stranded crossover between two homologous DNA duplexes (Holliday junction).. Its function is as follows. The RuvA-RuvB-RuvC complex processes Holliday junction (HJ) DNA during genetic recombination and DNA repair. Endonuclease that resolves HJ intermediates. Cleaves cruciform DNA by making single-stranded nicks across the HJ at symmetrical positions within the homologous arms, yielding a 5'-phosphate and a 3'-hydroxyl group; requires a central core of homology in the junction. The consensus cleavage sequence is 5'-(A/T)TT(C/G)-3'. Cleavage occurs on the 3'-side of the TT dinucleotide at the point of strand exchange. HJ branch migration catalyzed by RuvA-RuvB allows RuvC to scan DNA until it finds its consensus sequence, where it cleaves and resolves the cruciform DNA. The polypeptide is Crossover junction endodeoxyribonuclease RuvC (Rhizobium leguminosarum bv. trifolii (strain WSM2304)).